A 218-amino-acid polypeptide reads, in one-letter code: Uracil-DNA glycosylase (218 aa).

The Proton acceptor role is filled by Asp-68.

It belongs to the uracil-DNA glycosylase (UDG) superfamily. UNG family. Homodimer. Interacts with protein OPG148. Component of the Uracil-DNA glycosylase(UDG)-OPG148-polymerase complex; OPG148 and UDG form a heterodimeric processivity factor that associates with OPG71 to form the processive polymerase holoenzyme.

The catalysed reaction is Hydrolyzes single-stranded DNA or mismatched double-stranded DNA and polynucleotides, releasing free uracil.. In terms of biological role, plays an essential role in viral replication as a component of the DNA polymerase processivity factor. Excises uracil residues from the DNA which can arise as a result of misincorporation of dUMP residues by DNA polymerase or due to deamination of cytosine. The sequence is that of Uracil-DNA glycosylase (OPG116) from Variola virus.